Consider the following 905-residue polypeptide: DNA mismatch repair protein MutS (905 aa).

The segment at 272-292 (KKPPLSPPSREATGSTMAIDP) is disordered. 654-661 (GPNMAGKS) provides a ligand contact to ATP.

The protein belongs to the DNA mismatch repair MutS family.

This protein is involved in the repair of mismatches in DNA. It is possible that it carries out the mismatch recognition step. This protein has a weak ATPase activity. The chain is DNA mismatch repair protein MutS from Rhodopseudomonas palustris (strain BisB18).